The chain runs to 66 residues: Antitoxin RelB2 (66 aa).

Antitoxin component of a type II toxin-antitoxin (TA) system. Neutralizes the effect of cognate toxin RelE2, but no other RelE or ParE toxin. The sequence is that of Antitoxin RelB2 (relB2) from Caulobacter vibrioides (strain ATCC 19089 / CIP 103742 / CB 15) (Caulobacter crescentus).